A 620-amino-acid chain; its full sequence is Magnesium-chelatase 67 kDa subunit (620 aa).

Residue 33 to 40 (STVGSGKS) coordinates ATP. The tract at residues 272 to 322 (ATRMPEREPNPEEMAQDEPPPQEEQPQDEAEDQNAPPDEADSDADEEQEET) is disordered. A compositionally biased stretch (acidic residues) spans 296–322 (QPQDEAEDQNAPPDEADSDADEEQEET). The VWFA domain occupies 432–620 (LFIFMVDASG…AEQIVEAALS (189 aa)).

It belongs to the Mg-chelatase subunits D/I family.

It catalyses the reaction protoporphyrin IX + Mg(2+) + ATP + H2O = Mg-protoporphyrin IX + ADP + phosphate + 3 H(+). The protein operates within porphyrin-containing compound metabolism; bacteriochlorophyll biosynthesis. Involved in bacteriochlorophyll biosynthesis; introduces a magnesium ion into protoporphyrin IX to yield Mg-protoporphyrin IX. In Chlorobaculum tepidum (strain ATCC 49652 / DSM 12025 / NBRC 103806 / TLS) (Chlorobium tepidum), this protein is Magnesium-chelatase 67 kDa subunit (bchD).